A 387-amino-acid polypeptide reads, in one-letter code: Succinyl-diaminopimelate desuccinylase (387 aa).

His-75 contributes to the Zn(2+) binding site. The active site involves Asp-77. Zn(2+) is bound at residue Asp-108. The active-site Proton acceptor is the Glu-139. Zn(2+) is bound by residues Glu-140, Glu-168, and His-357.

This sequence belongs to the peptidase M20A family. DapE subfamily. As to quaternary structure, homodimer. Requires Zn(2+) as cofactor. Co(2+) is required as a cofactor.

The enzyme catalyses N-succinyl-(2S,6S)-2,6-diaminopimelate + H2O = (2S,6S)-2,6-diaminopimelate + succinate. It participates in amino-acid biosynthesis; L-lysine biosynthesis via DAP pathway; LL-2,6-diaminopimelate from (S)-tetrahydrodipicolinate (succinylase route): step 3/3. Functionally, catalyzes the hydrolysis of N-succinyl-L,L-diaminopimelic acid (SDAP), forming succinate and LL-2,6-diaminopimelate (DAP), an intermediate involved in the bacterial biosynthesis of lysine and meso-diaminopimelic acid, an essential component of bacterial cell walls. This chain is Succinyl-diaminopimelate desuccinylase, found in Caulobacter sp. (strain K31).